We begin with the raw amino-acid sequence, 51 residues long: Large ribosomal subunit protein eL39 (51 aa).

The segment at 32 to 51 is disordered; the sequence is KRRVTRSPTRRHWRRVKLKA.

It belongs to the eukaryotic ribosomal protein eL39 family.

This chain is Large ribosomal subunit protein eL39, found in Pyrobaculum arsenaticum (strain DSM 13514 / JCM 11321 / PZ6).